A 947-amino-acid chain; its full sequence is Mitogen-activated protein kinase kinase kinase 14 (947 aa).

2 disordered regions span residues 1 to 37 (MAVM…KKQS) and 135 to 171 (KGKR…TPEQ). The span at 135–151 (KGKRRSKARKKRKKKSS) shows a compositional bias: basic residues. Residues 400–655 (ATHQLRLGRG…ELGGKVNRAL (256 aa)) form the Protein kinase domain. The interaction with ZFP91 stretch occupies residues 401–653 (THQLRLGRGS…AAELGGKVNR (253 aa)). Residues 406-414 (LGRGSFGEV) and Lys429 each bind ATP. Asp515 serves as the catalytic Proton acceptor. Thr559 carries the phosphothreonine modification. Disordered regions lie at residues 662–766 (KSPW…ATVP) and 805–830 (LSDD…GVHS). The segment covering 665–674 (WRGEYKEPRH) has biased composition (basic and acidic residues). Pro residues predominate over residues 713 to 727 (LQPPLPPEPPEPNKS). The span at 741–752 (EPLPLSSLEPAP) shows a compositional bias: low complexity. The segment covering 814–829 (SKASQSSRDTLSSGVH) has biased composition (polar residues).

Belongs to the protein kinase superfamily. STE Ser/Thr protein kinase family. MAP kinase kinase kinase subfamily. Interacts with TRAF2, TRAF5, TRAF6, IKKA and NFKB2/P100. Interacts with TRAF3 and PELI3. Interacts with NIBP; the interaction is direct. Interacts with ARRB1 and ARRB2. Interacts with GRB10. Interacts with ZFP91. Interacts with NLRP12; this interaction promotes proteasomal degradation of MAP3K14. Directly interacts with DDX3X. Interacts (via C-terminus and kinase domain) with PPPC3A (via N-terminus) and PPP3CB. In terms of processing, autophosphorylated. Phosphorylation at Thr-559 is required to activate its kinase activity and 'Lys-63'-linked polyubiquitination. Phosphorylated by CHUK/IKKA leading to MAP3K14 destabilization. Ubiquitinated. Undergoes both 'Lys-48'- and 'Lys-63'-linked polyubiquitination. 'Lys-48'-linked polyubiquitination leads to its degradation by the proteasome, while 'Lys-63'-linked polyubiquitination stabilizes and activates it. Weakly expressed in testis, small intestine, spleen, thymus, peripheral blood leukocytes, prostate, ovary and colon.

The protein localises to the cytoplasm. The catalysed reaction is L-seryl-[protein] + ATP = O-phospho-L-seryl-[protein] + ADP + H(+). It carries out the reaction L-threonyl-[protein] + ATP = O-phospho-L-threonyl-[protein] + ADP + H(+). Its function is as follows. Lymphotoxin beta-activated kinase which seems to be exclusively involved in the activation of NF-kappa-B and its transcriptional activity. Phosphorylates CHUK/IKKA, thereby promoting proteolytic processing of NFKB2/P100, which leads to NF-kappa-B activation via the non-canonical pathway. Has an essential role in the non-canonical NF-kappa-B signaling that regulates genes encoding molecules involved in B-cell survival, lymphoid organogenesis, and immune response. Could act in a receptor-selective manner. The sequence is that of Mitogen-activated protein kinase kinase kinase 14 from Homo sapiens (Human).